Here is a 328-residue protein sequence, read N- to C-terminus: Beta-ketoacyl-[acyl-carrier-protein] synthase III 2 (328 aa).

Catalysis depends on residues cysteine 113 and histidine 255. Residues 256–260 (QANAR) form an ACP-binding region. The active site involves asparagine 285.

The protein belongs to the thiolase-like superfamily. FabH family. Homodimer.

The protein localises to the cytoplasm. The enzyme catalyses malonyl-[ACP] + acetyl-CoA + H(+) = 3-oxobutanoyl-[ACP] + CO2 + CoA. It functions in the pathway lipid metabolism; fatty acid biosynthesis. Functionally, catalyzes the condensation reaction of fatty acid synthesis by the addition to an acyl acceptor of two carbons from malonyl-ACP. Catalyzes the first condensation reaction which initiates fatty acid synthesis and may therefore play a role in governing the total rate of fatty acid production. Possesses both acetoacetyl-ACP synthase and acetyl transacylase activities. Its substrate specificity determines the biosynthesis of branched-chain and/or straight-chain of fatty acids. This is Beta-ketoacyl-[acyl-carrier-protein] synthase III 2 from Lactiplantibacillus plantarum (strain ATCC BAA-793 / NCIMB 8826 / WCFS1) (Lactobacillus plantarum).